Consider the following 78-residue polypeptide: Large ribosomal subunit protein bL28 (78 aa).

This sequence belongs to the bacterial ribosomal protein bL28 family.

In Klebsiella pneumoniae (strain 342), this protein is Large ribosomal subunit protein bL28.